A 1079-amino-acid chain; its full sequence is Carbamoyl phosphate synthase large chain (1079 aa).

Residues 2–403 (PKSTDIKSIL…SIQKAIRGLE (402 aa)) are carboxyphosphate synthetic domain. 12 residues coordinate ATP: Arg129, Arg169, Gly175, Gly176, Glu208, Leu210, Glu215, Gly241, Ile242, His243, Gln285, and Glu299. The 196-residue stretch at 133–328 (EHSMKKLNLE…IAKIAAKLAI (196 aa)) folds into the ATP-grasp 1 domain. 3 residues coordinate Mg(2+): Gln285, Glu299, and Asn301. Mn(2+)-binding residues include Gln285, Glu299, and Asn301. Residues 404–553 (VGASGFDSKI…YSTWEDECES (150 aa)) are oligomerization domain. Positions 554-936 (HPSKNNKKII…AFSKSMLGAH (383 aa)) are carbamoyl phosphate synthetic domain. The region spanning 679 to 870 (QKTVNKLRLQ…LAKISVRVMC (192 aa)) is the ATP-grasp 2 domain. Residues Arg715, Gln754, Leu756, Glu761, Gly786, Val787, His788, Ser789, Gln829, and Glu841 each contribute to the ATP site. Residues Gln829, Glu841, and Asn843 each coordinate Mg(2+). Positions 829, 841, and 843 each coordinate Mn(2+). One can recognise an MGS-like domain in the interval 937–1079 (TNMKKSGRVL…KKIQLFYTKK (143 aa)). The interval 937–1079 (TNMKKSGRVL…KKIQLFYTKK (143 aa)) is allosteric domain.

The protein belongs to the CarB family. As to quaternary structure, composed of two chains; the small (or glutamine) chain promotes the hydrolysis of glutamine to ammonia, which is used by the large (or ammonia) chain to synthesize carbamoyl phosphate. Tetramer of heterodimers (alpha,beta)4. The cofactor is Mg(2+). It depends on Mn(2+) as a cofactor.

It catalyses the reaction hydrogencarbonate + L-glutamine + 2 ATP + H2O = carbamoyl phosphate + L-glutamate + 2 ADP + phosphate + 2 H(+). The catalysed reaction is hydrogencarbonate + NH4(+) + 2 ATP = carbamoyl phosphate + 2 ADP + phosphate + 2 H(+). It functions in the pathway amino-acid biosynthesis; L-arginine biosynthesis; carbamoyl phosphate from bicarbonate: step 1/1. The protein operates within pyrimidine metabolism; UMP biosynthesis via de novo pathway; (S)-dihydroorotate from bicarbonate: step 1/3. In terms of biological role, large subunit of the glutamine-dependent carbamoyl phosphate synthetase (CPSase). CPSase catalyzes the formation of carbamoyl phosphate from the ammonia moiety of glutamine, carbonate, and phosphate donated by ATP, constituting the first step of 2 biosynthetic pathways, one leading to arginine and/or urea and the other to pyrimidine nucleotides. The large subunit (synthetase) binds the substrates ammonia (free or transferred from glutamine from the small subunit), hydrogencarbonate and ATP and carries out an ATP-coupled ligase reaction, activating hydrogencarbonate by forming carboxy phosphate which reacts with ammonia to form carbamoyl phosphate. This Buchnera aphidicola subsp. Acyrthosiphon pisum (strain APS) (Acyrthosiphon pisum symbiotic bacterium) protein is Carbamoyl phosphate synthase large chain.